A 459-amino-acid chain; its full sequence is MAQNFSTVGDGKQMLLERDSSKRVLTGCFLSLLIFTTLLGNTLVCVAVTKFRHLRSKVTNFFVISLAISDLLVAILVMPWKAATEIMGFWPFGEFCNIWVAFDIMCSTASILNLCVISVDRYWAISSPFRYERKMTPKVACLMISVAWTLSVLISFIPVQLNWHKAQTASYVELNGTYAGDLPPDNCDSSLNRTYAISSSLISFYIPVAIMIVTYTRIYRIAQKQIRRISALERAAESAQNRHSSMGNSLSMESECSFKMSFKRETKVLKTLSVIMGVFVCCWLPFFILNCMVPFCEADDTTDFPCISSTTFDVFVWFGWANSSLNPIIYAFNADFRKAFSILLGCHRLCPGNSAIEIVSINNTGAPLSNPSCQYQPKSHIPKEGNHSSSYVIPHSILCQEEELQKKDGFGGEMEVGLVNNAMEKVSPAISGNFDSDAAVTLETINPITQNGQHKSMSC.

Residues 1–23 (MAQNFSTVGDGKQMLLERDSSKR) are Extracellular-facing. N-linked (GlcNAc...) asparagine glycosylation is present at N4. A helical membrane pass occupies residues 24–49 (VLTGCFLSLLIFTTLLGNTLVCVAVT). At 50–60 (KFRHLRSKVTN) the chain is on the cytoplasmic side. The helical transmembrane segment at 61-87 (FFVISLAISDLLVAILVMPWKAATEIM) threads the bilayer. The Extracellular segment spans residues 88–96 (GFWPFGEFC). C96 and C187 are joined by a disulfide. The helical transmembrane segment at 97 to 119 (NIWVAFDIMCSTASILNLCVISV) threads the bilayer. Residues 120-138 (DRYWAISSPFRYERKMTPK) lie on the Cytoplasmic side of the membrane. Residues 139–164 (VACLMISVAWTLSVLISFIPVQLNWH) form a helical membrane-spanning segment. The Extracellular segment spans residues 165 to 191 (KAQTASYVELNGTYAGDLPPDNCDSSL). The helical transmembrane segment at 192–216 (NRTYAISSSLISFYIPVAIMIVTYT) threads the bilayer. At 217 to 269 (RIYRIAQKQIRRISALERAAESAQNRHSSMGNSLSMESECSFKMSFKRETKVL) the chain is on the cytoplasmic side. The helical transmembrane segment at 270–297 (KTLSVIMGVFVCCWLPFFILNCMVPFCE) threads the bilayer. Residues 298–311 (ADDTTDFPCISSTT) are Extracellular-facing. Residues 312 to 333 (FDVFVWFGWANSSLNPIIYAFN) form a helical membrane-spanning segment. The Cytoplasmic segment spans residues 334–459 (ADFRKAFSIL…QNGQHKSMSC (126 aa)).

Belongs to the G-protein coupled receptor 1 family.

It is found in the cell membrane. The protein resides in the cell projection. Its subcellular location is the cilium membrane. Its function is as follows. Receptor for dopamine. This chain is D(1)-like dopamine receptor (d14), found in Takifugu rubripes (Japanese pufferfish).